The chain runs to 241 residues: 1-(5-phosphoribosyl)-5-[(5-phosphoribosylamino)methylideneamino] imidazole-4-carboxamide isomerase (241 aa).

Catalysis depends on aspartate 10, which acts as the Proton acceptor. Aspartate 131 functions as the Proton donor in the catalytic mechanism.

The protein belongs to the HisA/HisF family.

The protein resides in the cytoplasm. It catalyses the reaction 1-(5-phospho-beta-D-ribosyl)-5-[(5-phospho-beta-D-ribosylamino)methylideneamino]imidazole-4-carboxamide = 5-[(5-phospho-1-deoxy-D-ribulos-1-ylimino)methylamino]-1-(5-phospho-beta-D-ribosyl)imidazole-4-carboxamide. It participates in amino-acid biosynthesis; L-histidine biosynthesis; L-histidine from 5-phospho-alpha-D-ribose 1-diphosphate: step 4/9. The polypeptide is 1-(5-phosphoribosyl)-5-[(5-phosphoribosylamino)methylideneamino] imidazole-4-carboxamide isomerase (Hyphomonas neptunium (strain ATCC 15444)).